Consider the following 472-residue polypeptide: MVFFRSVSLLNKLRSRAVQQSNLSNTVRWFQVQTSASDLDLRSQLKELIPEQQERIKKLKAEHGKVQLGNITVDMVLGGMRGMTGLLWETSLLDPEEGIRFRGLSIPECQKLLPGAKPGGEPLPEGLLWLLLTGKVPTKEQVDALSAELRSRAAVPEHVYKTIDALPVTAHPMTQFATGVMALQVQSEFQKAYEKGIHKTKYWEPTYEDSITLIAQLPVVAAYIYRRMYKNGQSISTDDSLDYGANFAHMLGYDSPSMQELMRLYVTIHTDHEGGNVSAHTGHLVASALSDPYLSFAAALNGLAGPLHGLANQEVLLWIKSVVSECGENVTKEQLKDYIWKTLNSGKVVPGYGHGVLRNTDPRYICQREFALKHLPDDPLFQLVSNLFEVVPPILTELGKVKNPWPNVDAHSGVLLNHYGLTEARYYTVLFGVSRAIGICSQLVWDRALGLPLERPKSVTMEWLENHCKKSS.

Active-site residues include His308, His354, and Asp409.

It belongs to the citrate synthase family. Homodimer.

It localises to the mitochondrion matrix. The enzyme catalyses oxaloacetate + acetyl-CoA + H2O = citrate + CoA + H(+). Its pathway is carbohydrate metabolism; tricarboxylic acid cycle; isocitrate from oxaloacetate: step 1/2. In Daucus carota (Wild carrot), this protein is Citrate synthase, mitochondrial (CS).